A 190-amino-acid polypeptide reads, in one-letter code: Adenylate kinase (190 aa).

11–16 (GAGKGT) is a binding site for ATP. The segment at 31 to 60 (STGDIFRFNIKNETELGKLAKTFMDKGDLV) is NMP. AMP contacts are provided by residues T32, R37, 58–60 (DLV), 86–89 (GFPR), and Q93. Residues 127–137 (ERGKTSGRVDD) are LID. Residue R128 coordinates ATP. AMP-binding residues include R134 and R146. Position 174 (G174) interacts with ATP.

The protein belongs to the adenylate kinase family. In terms of assembly, monomer.

It is found in the cytoplasm. The catalysed reaction is AMP + ATP = 2 ADP. Its pathway is purine metabolism; AMP biosynthesis via salvage pathway; AMP from ADP: step 1/1. In terms of biological role, catalyzes the reversible transfer of the terminal phosphate group between ATP and AMP. Plays an important role in cellular energy homeostasis and in adenine nucleotide metabolism. This Flavobacterium psychrophilum (strain ATCC 49511 / DSM 21280 / CIP 103535 / JIP02/86) protein is Adenylate kinase.